The following is a 916-amino-acid chain: DNA gyrase subunit A (916 aa).

A Topo IIA-type catalytic domain is found at 42-544 (LPDVRDGLKP…FGGDIADEDL (503 aa)). Y130 (O-(5'-phospho-DNA)-tyrosine intermediate) is an active-site residue. The GyrA-box motif lies at 571-577 (QRRGGRG). Positions 739-748 (SDDLEDETAD) are enriched in acidic residues. Disordered stretches follow at residues 739–774 (SDDL…RGMR) and 897–916 (ESEL…EAEN).

It belongs to the type II topoisomerase GyrA/ParC subunit family. In terms of assembly, heterotetramer, composed of two GyrA and two GyrB chains. In the heterotetramer, GyrA contains the active site tyrosine that forms a transient covalent intermediate with DNA, while GyrB binds cofactors and catalyzes ATP hydrolysis.

It is found in the cytoplasm. The catalysed reaction is ATP-dependent breakage, passage and rejoining of double-stranded DNA.. Its function is as follows. A type II topoisomerase that negatively supercoils closed circular double-stranded (ds) DNA in an ATP-dependent manner to modulate DNA topology and maintain chromosomes in an underwound state. Negative supercoiling favors strand separation, and DNA replication, transcription, recombination and repair, all of which involve strand separation. Also able to catalyze the interconversion of other topological isomers of dsDNA rings, including catenanes and knotted rings. Type II topoisomerases break and join 2 DNA strands simultaneously in an ATP-dependent manner. In Neisseria gonorrhoeae, this protein is DNA gyrase subunit A.